The following is a 353-amino-acid chain: Photosystem II protein D1 (353 aa).

3 helical membrane-spanning segments follow: residues 29–46 (YVGWFGVIMIPTLLTATI), 118–133 (HFLIGIFCYMGREWEL), and 142–156 (WICVAYSAPVAAATA). Residue histidine 118 coordinates chlorophyll a. Residue tyrosine 126 participates in pheophytin a binding. The [CaMn4O5] cluster site is built by aspartate 170 and glutamate 189. The chain crosses the membrane as a helical span at residues 197 to 218 (FHMLGVAGVFGGSLFSAMHGSL). Histidine 198 contributes to the chlorophyll a binding site. A quinone contacts are provided by residues histidine 215 and 264–265 (SF). Residue histidine 215 coordinates Fe cation. A Fe cation-binding site is contributed by histidine 272. The helical transmembrane segment at 274 to 288 (FLAAWPVVGIWFTSL) threads the bilayer. Residues histidine 332, glutamate 333, aspartate 342, and alanine 344 each contribute to the [CaMn4O5] cluster site. The propeptide occupies 345–353 (AVKAPSIIG).

It belongs to the reaction center PufL/M/PsbA/D family. In terms of assembly, PSII is composed of 1 copy each of membrane proteins PsbA, PsbB, PsbC, PsbD, PsbE, PsbF, PsbH, PsbI, PsbJ, PsbK, PsbL, PsbM, PsbT, PsbX, PsbY, PsbZ, Psb30/Ycf12, peripheral proteins PsbO, CyanoQ (PsbQ), PsbU, PsbV and a large number of cofactors. It forms dimeric complexes. It depends on The D1/D2 heterodimer binds P680, chlorophylls that are the primary electron donor of PSII, and subsequent electron acceptors. It shares a non-heme iron and each subunit binds pheophytin, quinone, additional chlorophylls, carotenoids and lipids. D1 provides most of the ligands for the Mn4-Ca-O5 cluster of the oxygen-evolving complex (OEC). There is also a Cl(-1) ion associated with D1 and D2, which is required for oxygen evolution. The PSII complex binds additional chlorophylls, carotenoids and specific lipids. as a cofactor. In terms of processing, tyr-161 forms a radical intermediate that is referred to as redox-active TyrZ, YZ or Y-Z. C-terminally processed by CtpA; processing is essential to allow assembly of the oxygen-evolving complex and thus photosynthetic growth.

The protein resides in the cellular thylakoid membrane. It catalyses the reaction 2 a plastoquinone + 4 hnu + 2 H2O = 2 a plastoquinol + O2. Its function is as follows. Photosystem II (PSII) is a light-driven water:plastoquinone oxidoreductase that uses light energy to abstract electrons from H(2)O, generating O(2) and a proton gradient subsequently used for ATP formation. It consists of a core antenna complex that captures photons, and an electron transfer chain that converts photonic excitation into a charge separation. The D1/D2 (PsbA/PsbD) reaction center heterodimer binds P680, the primary electron donor of PSII as well as several subsequent electron acceptors. This Prochlorothrix hollandica protein is Photosystem II protein D1.